The chain runs to 389 residues: Agamous-like MADS-box protein AGL65 (389 aa).

Residues Met-1–His-61 enclose the MADS-box domain. Coiled-coil stretches lie at residues Gln-77–Cys-131 and Gly-293–Asp-325. A disordered region spans residues Asn-310–Pro-343. The span at Gln-312–Gln-324 shows a compositional bias: low complexity.

As to quaternary structure, forms a heterodimer with AGL104. Expressed in pollen.

The protein localises to the nucleus. In terms of biological role, probable transcription factor that forms a heterodimer with the MADS-box protein AGL104 and is involved in the regulation of pollen maturation at the late stages of pollen development and pollen tube growth. This Arabidopsis thaliana (Mouse-ear cress) protein is Agamous-like MADS-box protein AGL65.